The sequence spans 327 residues: Altered inheritance rate of mitochondria protein 25 (327 aa).

This sequence belongs to the phospholipid scramblase family.

It localises to the mitochondrion. The chain is Altered inheritance rate of mitochondria protein 25 (AIM25) from Saccharomyces cerevisiae (strain ATCC 204508 / S288c) (Baker's yeast).